Here is a 545-residue protein sequence, read N- to C-terminus: CTP synthase (545 aa).

The tract at residues M1–I266 is amidoligase domain. A CTP-binding site is contributed by S14. S14 contributes to the UTP binding site. ATP is bound by residues S15–I20 and D72. Mg(2+)-binding residues include D72 and E140. CTP is bound by residues D147–E149, K187–Q192, and K223. Residues K187 to Q192 and K223 each bind UTP. K239 to V241 is a binding site for ATP. The 252-residue stretch at T291–G542 folds into the Glutamine amidotransferase type-1 domain. G352 contributes to the L-glutamine binding site. C379 acts as the Nucleophile; for glutamine hydrolysis in catalysis. L-glutamine contacts are provided by residues L380 to Q383, E403, and R470. Residues H515 and E517 contribute to the active site.

This sequence belongs to the CTP synthase family. As to quaternary structure, homotetramer.

It carries out the reaction UTP + L-glutamine + ATP + H2O = CTP + L-glutamate + ADP + phosphate + 2 H(+). The catalysed reaction is L-glutamine + H2O = L-glutamate + NH4(+). The enzyme catalyses UTP + NH4(+) + ATP = CTP + ADP + phosphate + 2 H(+). It participates in pyrimidine metabolism; CTP biosynthesis via de novo pathway; CTP from UDP: step 2/2. Its activity is regulated as follows. Allosterically activated by GTP, when glutamine is the substrate; GTP has no effect on the reaction when ammonia is the substrate. The allosteric effector GTP functions by stabilizing the protein conformation that binds the tetrahedral intermediate(s) formed during glutamine hydrolysis. Inhibited by the product CTP, via allosteric rather than competitive inhibition. Catalyzes the ATP-dependent amination of UTP to CTP with either L-glutamine or ammonia as the source of nitrogen. Regulates intracellular CTP levels through interactions with the four ribonucleotide triphosphates. In Vibrio vulnificus (strain CMCP6), this protein is CTP synthase.